The primary structure comprises 500 residues: Palmitoleoyl-protein carboxylesterase notum1a (500 aa).

An N-terminal signal peptide occupies residues 1 to 26 (MKRSLWVMQVLHWAVMLALVQCGALG). N-linked (GlcNAc...) asparagine glycosylation occurs at asparagine 101. Residues serine 237, aspartate 344, and histidine 393 each act as charge relay system in the active site.

The protein belongs to the pectinacetylesterase family. Notum subfamily.

It is found in the secreted. It catalyses the reaction [Wnt protein]-O-(9Z)-hexadecenoyl-L-serine + H2O = [Wnt protein]-L-serine + (9Z)-hexadecenoate + H(+). Carboxylesterase that acts as a key negative regulator of the Wnt signaling pathway. Acts by specifically mediating depalmitoleoylation of WNT proteins. Serine palmitoleoylation of WNT proteins is required for efficient binding to frizzled receptors. In Danio rerio (Zebrafish), this protein is Palmitoleoyl-protein carboxylesterase notum1a.